Reading from the N-terminus, the 177-residue chain is CDP-diacylglycerol--serine O-phosphatidyltransferase (177 aa).

5 consecutive transmembrane segments (helical) span residues 4-24, 28-48, 77-97, 116-136, and 140-160; these read IPCMITIGNFICGLLAIHSLL, IHSAVLFIFTGMFLDFFDGMA, MLAYSVALYTLPFIGILCALT, LPTFIGMPIPFAGMCLVILSF, and PILLAIGTCGLSYLMVSKIKF.

The protein belongs to the CDP-alcohol phosphatidyltransferase class-I family.

It localises to the cell membrane. The catalysed reaction is a CDP-1,2-diacyl-sn-glycerol + L-serine = a 1,2-diacyl-sn-glycero-3-phospho-L-serine + CMP + H(+). In Bacillus subtilis (strain 168), this protein is CDP-diacylglycerol--serine O-phosphatidyltransferase (pssA).